We begin with the raw amino-acid sequence, 473 residues long: Putative F-box/LRR-repeat protein At3g59170 (473 aa).

The region spanning 6–54 (KDMINVLPDALLCHILSFLTTKEAASTSLLSRRWRYLLAFVPNLEFDDS) is the F-box domain. 5 LRR repeats span residues 168-194 (TIKIRDGPFIDVKHVHLPKLKTLYLQS), 196-221 (MFDENDIGFRKLLSGCPVLEELVLDG), 229-254 (SFTVSVATLKRLTFCCQKMSSFGYMH), 333-364 (VLYLSPETLEVLTYCCKQIPIFENLSHLTIKS), and 365-390 (DPNVGWKPLTKLLKNSPKLETLVFQG).

The protein is Putative F-box/LRR-repeat protein At3g59170 of Arabidopsis thaliana (Mouse-ear cress).